Reading from the N-terminus, the 162-residue chain is Larval cuticle protein F1 (162 aa).

4 consecutive repeat copies span residues 27–30 (AAPV), 43–46 (AAPV), 59–62 (AAPV), and 75–78 (AAPA).

In terms of biological role, component of the larval cuticle. This is Larval cuticle protein F1 from Tenebrio molitor (Yellow mealworm beetle).